A 315-amino-acid chain; its full sequence is Ribosomal RNA small subunit methyltransferase H (315 aa).

Residues 33–35 (AGH), D53, F80, D101, and Q108 each bind S-adenosyl-L-methionine.

This sequence belongs to the methyltransferase superfamily. RsmH family.

It is found in the cytoplasm. It carries out the reaction cytidine(1402) in 16S rRNA + S-adenosyl-L-methionine = N(4)-methylcytidine(1402) in 16S rRNA + S-adenosyl-L-homocysteine + H(+). Its function is as follows. Specifically methylates the N4 position of cytidine in position 1402 (C1402) of 16S rRNA. The sequence is that of Ribosomal RNA small subunit methyltransferase H from Natranaerobius thermophilus (strain ATCC BAA-1301 / DSM 18059 / JW/NM-WN-LF).